The following is a 592-amino-acid chain: Cell division protein FtsZ (592 aa).

GTP contacts are provided by residues 24-28 (GGGGN), 111-113 (GTG), Glu142, Arg146, and Asp190. Positions 333-362 (KFQKSVSSVRKNDSGINQTASHPQSSQLRS) are disordered.

This sequence belongs to the FtsZ family. Homodimer. Polymerizes to form a dynamic ring structure in a strictly GTP-dependent manner. Interacts directly with several other division proteins.

It localises to the cytoplasm. In terms of biological role, essential cell division protein that forms a contractile ring structure (Z ring) at the future cell division site. The regulation of the ring assembly controls the timing and the location of cell division. One of the functions of the FtsZ ring is to recruit other cell division proteins to the septum to produce a new cell wall between the dividing cells. Binds GTP and shows GTPase activity. In Bartonella bacilliformis, this protein is Cell division protein FtsZ.